The following is a 492-amino-acid chain: GDP-Man:Man(3)GlcNAc(2)-PP-Dol alpha-1,2-mannosyltransferase (492 aa).

The Lumenal portion of the chain corresponds to 1–19 (MAAGERSWCLCKLLRFFYS). The helical transmembrane segment at 20–40 (LFFPGLIVCGTLCVCLVIVLW) threads the bilayer. Residues 41-233 (GIRLLLQRKK…TRNPFLSKVK (193 aa)) are Cytoplasmic-facing. Residues 234-254 (LIYYYLFAFIYGLVGSCSDVV) constitute an intramembrane region (helical). The Cytoplasmic portion of the chain corresponds to 255 to 399 (MVNSSWTLNH…IGLHTMWNEH (145 aa)). The segment at residues 400 to 420 (FGIGVVECMAAGTIILAHNSG) is an intramembrane region (helical). Over 421 to 492 (GPKLDIVVPH…FLSSVEKLFK (72 aa)) the chain is Cytoplasmic.

Belongs to the glycosyltransferase group 1 family. Glycosyltransferase 4 subfamily.

The protein localises to the endoplasmic reticulum membrane. The enzyme catalyses an alpha-D-Man-(1-&gt;3)-[alpha-D-Man-(1-&gt;6)]-beta-D-Man-(1-&gt;4)-beta-D-GlcNAc-(1-&gt;4)-alpha-D-GlcNAc-diphospho-di-trans,poly-cis-dolichol + 2 GDP-alpha-D-mannose = an alpha-D-Man-(1-&gt;2)-alpha-D-Man-(1-&gt;2)-alpha-D-Man-(1-&gt;3)-[alpha-D-Man-(1-&gt;6)]-beta-D-Man-(1-&gt;4)-beta-D-GlcNAc-(1-&gt;4)-alpha-D-GlcNAc-diphospho-di-trans,poly-cis-dolichol + 2 GDP + 2 H(+). Its pathway is protein modification; protein glycosylation. Its function is as follows. GDP-Man:Man(3)GlcNAc(2)-PP-Dol alpha-1,2-mannosyltransferase that operates in the biosynthetic pathway of dolichol-linked oligosaccharides, the glycan precursors employed in protein asparagine (N)-glycosylation. The assembly of dolichol-linked oligosaccharides begins on the cytosolic side of the endoplasmic reticulum membrane and finishes in its lumen. The sequential addition of sugars to dolichol pyrophosphate produces dolichol-linked oligosaccharides containing fourteen sugars, including two GlcNAcs, nine mannoses and three glucoses. Once assembled, the oligosaccharide is transferred from the lipid to nascent proteins by oligosaccharyltransferases. Catalyzes, on the cytoplasmic face of the endoplasmic reticulum, the addition of the fourth and fifth mannose residues to the dolichol-linked oligosaccharide chain, to produce Man(5)GlcNAc(2)-PP-dolichol core oligosaccharide. Man(5)GlcNAc(2)-PP-dolichol is a substrate for ALG3, the following enzyme in the biosynthetic pathway. The protein is GDP-Man:Man(3)GlcNAc(2)-PP-Dol alpha-1,2-mannosyltransferase of Homo sapiens (Human).